The sequence spans 307 residues: Junctional adhesion molecule 2A (307 aa).

The first 18 residues, 1 to 18 (MLVCVSLLILIHSVPVSP), serve as a signal peptide directing secretion. The region spanning 19 to 112 (VTVSSRNPKV…EVSAPSDSIS (94 aa)) is the Ig-like V-type domain. Residues 19-226 (VTVSSRNPKV…FQTHDLNVAA (208 aa)) are Extracellular-facing. 2 disulfides stabilise this stretch: Cys-40-Cys-102 and Cys-147-Cys-197. The 100-residue stretch at 126-225 (PQTPSCDVPS…TFQTHDLNVA (100 aa)) folds into the Ig-like C2-type domain. The helical transmembrane segment at 227 to 247 (VVSAVVLVCVILFLCAFGVCL) threads the bilayer. Over 248-307 (AHRQGYFSRHRGRSFWIPHCHGVTHISSQNLNPSEHTQHSGYSHPPKEPQDFKHTQSFML) the chain is Cytoplasmic. Residues 278–288 (LNPSEHTQHSG) are compositionally biased toward polar residues. Residues 278-307 (LNPSEHTQHSGYSHPPKEPQDFKHTQSFML) form a disordered region. Over residues 292–301 (PPKEPQDFKH) the composition is skewed to basic and acidic residues.

The protein belongs to the immunoglobulin superfamily.

It is found in the cell membrane. The protein localises to the cell junction. It localises to the tight junction. Functionally, junctional adhesion protein that mediates heterotypic cell-cell interactions to regulate different cellular processes. During myogenesis, it is involved in myocyte fusion through the binding of jam3b on neighboring myocytes. The chain is Junctional adhesion molecule 2A (jam2a) from Danio rerio (Zebrafish).